A 492-amino-acid chain; its full sequence is Phenylalanine--tRNA ligase alpha subunit (492 aa).

Residues threonine 335, 374-376, and tyrosine 414 contribute to the L-phenylalanine site; that span reads QLE. Glutamate 416 serves as a coordination point for Mg(2+). Phenylalanine 439 is an L-phenylalanine binding site.

This sequence belongs to the class-II aminoacyl-tRNA synthetase family. Phe-tRNA synthetase alpha subunit type 2 subfamily. In terms of assembly, tetramer of two alpha and two beta subunits. Mg(2+) is required as a cofactor.

It localises to the cytoplasm. The catalysed reaction is tRNA(Phe) + L-phenylalanine + ATP = L-phenylalanyl-tRNA(Phe) + AMP + diphosphate + H(+). The chain is Phenylalanine--tRNA ligase alpha subunit from Methanosarcina acetivorans (strain ATCC 35395 / DSM 2834 / JCM 12185 / C2A).